Reading from the N-terminus, the 548-residue chain is Probable 2,3-bisphosphoglycerate-independent phosphoglycerate mutase (548 aa).

Mn(2+) contacts are provided by aspartate 20 and serine 73. The active-site Phosphoserine intermediate is serine 73. Substrate is bound by residues histidine 134, 164–165, arginine 200, arginine 207, 279–282, and lysine 354; these read RD and RGDR. 5 residues coordinate Mn(2+): aspartate 422, histidine 426, aspartate 463, histidine 464, and histidine 493.

This sequence belongs to the BPG-independent phosphoglycerate mutase family. In terms of assembly, monomer. Mn(2+) serves as cofactor.

The catalysed reaction is (2R)-2-phosphoglycerate = (2R)-3-phosphoglycerate. The protein operates within carbohydrate degradation; glycolysis; pyruvate from D-glyceraldehyde 3-phosphate: step 3/5. Catalyzes the interconversion of 2-phosphoglycerate and 3-phosphoglycerate. This Leptospira interrogans serogroup Icterohaemorrhagiae serovar copenhageni (strain Fiocruz L1-130) protein is Probable 2,3-bisphosphoglycerate-independent phosphoglycerate mutase (gpmI).